The primary structure comprises 188 residues: dCTP deaminase (188 aa).

Residues 111–116 (KSTYAR), 135–137 (TLE), glutamine 156, tyrosine 170, lysine 179, and glutamine 180 each bind dCTP. Glutamate 137 acts as the Proton donor/acceptor in catalysis.

Belongs to the dCTP deaminase family. As to quaternary structure, homotrimer.

It catalyses the reaction dCTP + H2O + H(+) = dUTP + NH4(+). The protein operates within pyrimidine metabolism; dUMP biosynthesis; dUMP from dCTP (dUTP route): step 1/2. In terms of biological role, catalyzes the deamination of dCTP to dUTP. The chain is dCTP deaminase from Orientia tsutsugamushi (strain Boryong) (Rickettsia tsutsugamushi).